Consider the following 585-residue polypeptide: Serine/threonine-protein kinase Nek3 (585 aa).

Residues 4–258 (YEVLEQIGKG…AAELLKHPHL (255 aa)) enclose the Protein kinase domain. ATP is bound by residues 10–18 (IGKGSFGSA) and Lys-33. Asp-129 functions as the Proton acceptor in the catalytic mechanism. Disordered stretches follow at residues 354 to 413 (GNHS…TPVN) and 489 to 511 (DSSK…SNPL). Composition is skewed to polar residues over residues 400–413 (RASQ…TPVN) and 498–511 (SSDP…SNPL).

This sequence belongs to the protein kinase superfamily. NEK Ser/Thr protein kinase family. NIMA subfamily. In terms of assembly, interacts with PLIM2B. As to expression, expressed in pollen grains.

It catalyses the reaction L-seryl-[protein] + ATP = O-phospho-L-seryl-[protein] + ADP + H(+). The enzyme catalyses L-threonyl-[protein] + ATP = O-phospho-L-threonyl-[protein] + ADP + H(+). May be involved in plant development processes. May function downstream of DCW11 in retrograde signaling from the mitochondria to the nucleus. Seems to be involved in the mechanism of cytoplasmic male sterility (CMS) occurrence. In Oryza sativa subsp. japonica (Rice), this protein is Serine/threonine-protein kinase Nek3.